A 417-amino-acid polypeptide reads, in one-letter code: Glucose-1-phosphatase (417 aa).

The signal sequence occupies residues 1-23 (MKYKVLTLCLSAALFAPIAPTMA). Substrate is bound at residue Arg-41. Catalysis depends on His-42, which acts as the Nucleophile. Residues Arg-45, Arg-118, and Glu-220 each contribute to the substrate site. The active-site Proton donor is Asp-315.

It belongs to the histidine acid phosphatase family. As to quaternary structure, homodimer.

It localises to the periplasm. The enzyme catalyses alpha-D-glucose 1-phosphate + H2O = D-glucose + phosphate. The polypeptide is Glucose-1-phosphatase (agp) (Providencia rettgeri).